Consider the following 300-residue polypeptide: FeMo cofactor biosynthesis protein NifB (300 aa).

A Radical SAM core domain is found at 24 to 266 (HDKVGRVHLP…PQFRACGQCR (243 aa)). 3 residues coordinate [4Fe-4S] cluster: cysteine 38, cysteine 42, and cysteine 45. Positions 93, 144, and 196 each coordinate S-adenosyl-L-methionine. Positions 262 and 265 each coordinate [4Fe-4S] cluster.

It belongs to the radical SAM superfamily. NifB family. As to quaternary structure, monomer. The cofactor is [4Fe-4S] cluster.

It participates in cofactor biosynthesis; Fe-Mo cofactor biosynthesis. Involved in the biosynthesis of the iron-molybdenum cofactor (FeMo-co or M-cluster) found in the dinitrogenase enzyme of the nitrogenase complex in nitrogen-fixing microorganisms. NifB catalyzes the crucial step of radical SAM-dependent carbide insertion that occurs concomitant with the insertion of a 9th sulfur and the rearrangement/coupling of two [4Fe-4S] clusters into a [8Fe-9S-C] cluster, the precursor to the M-cluster. In Methanocaldococcus jannaschii (strain ATCC 43067 / DSM 2661 / JAL-1 / JCM 10045 / NBRC 100440) (Methanococcus jannaschii), this protein is FeMo cofactor biosynthesis protein NifB.